The following is a 163-amino-acid chain: Staphylokinase (163 aa).

An N-terminal signal peptide occupies residues 1-27; that stretch reads MLKRSLLFLTVLLLLFSFSSITNEVSA.

The protein belongs to the staphylokinase family.

Its subcellular location is the secreted. Its function is as follows. Potent plasminogen activator that converts plasminogen into plasmin. It forms a 1:1 complex with plasmin, which in turn activates other plasminogen molecules. The sequence is that of Staphylokinase from Staphylococcus phage S phi-C (Bacteriophage S phi-C).